We begin with the raw amino-acid sequence, 500 residues long: Tektin-like protein 1 (500 aa).

Residues Met-198–Ser-229 adopt a coiled-coil conformation. Tyr-372 bears the Phosphotyrosine mark. A coiled-coil region spans residues Asp-420 to Thr-444.

Microtubule inner protein component of sperm flagellar doublet microtubules.

It localises to the cytoplasm. It is found in the cytoskeleton. The protein resides in the flagellum axoneme. Microtubule inner protein (MIP) part of the dynein-decorated doublet microtubules (DMTs) in sperm flagellar axoneme, which is required for motile flagellum beating. Forms an extensive interaction network cross-linking the lumen of axonemal doublet microtubules. This is Tektin-like protein 1 from Bos taurus (Bovine).